We begin with the raw amino-acid sequence, 120 residues long: Large ribosomal subunit protein uL18 (120 aa).

It belongs to the universal ribosomal protein uL18 family. Part of the 50S ribosomal subunit; part of the 5S rRNA/L5/L18/L25 subcomplex. Contacts the 5S and 23S rRNAs.

This is one of the proteins that bind and probably mediate the attachment of the 5S RNA into the large ribosomal subunit, where it forms part of the central protuberance. This chain is Large ribosomal subunit protein uL18, found in Bradyrhizobium sp. (strain BTAi1 / ATCC BAA-1182).